The sequence spans 270 residues: Ethanolamine ammonia-lyase small subunit (270 aa).

Valine 166, glutamate 187, and cysteine 216 together coordinate adenosylcob(III)alamin.

It belongs to the EutC family. In terms of assembly, the basic unit is a heterodimer which dimerizes to form tetramers. The heterotetramers trimerize; 6 large subunits form a core ring with 6 small subunits projecting outwards. Requires adenosylcob(III)alamin as cofactor.

The protein resides in the bacterial microcompartment. It catalyses the reaction ethanolamine = acetaldehyde + NH4(+). It functions in the pathway amine and polyamine degradation; ethanolamine degradation. Catalyzes the deamination of various vicinal amino-alcohols to oxo compounds. Allows this organism to utilize ethanolamine as the sole source of nitrogen and carbon in the presence of external vitamin B12. This Ralstonia nicotianae (strain ATCC BAA-1114 / GMI1000) (Ralstonia solanacearum) protein is Ethanolamine ammonia-lyase small subunit.